The sequence spans 498 residues: Glycerol kinase (498 aa).

Residue Thr-12 participates in ADP binding. The ATP site is built by Thr-12, Thr-13, and Ser-14. Thr-12 is a sn-glycerol 3-phosphate binding site. Arg-16 is an ADP binding site. Arg-82, Glu-83, and Tyr-134 together coordinate sn-glycerol 3-phosphate. Positions 82, 83, and 134 each coordinate glycerol. His-230 bears the Phosphohistidine; by HPr mark. Position 244 (Asp-244) interacts with sn-glycerol 3-phosphate. Glycerol is bound by residues Asp-244 and Gln-245. Positions 266 and 309 each coordinate ADP. 4 residues coordinate ATP: Thr-266, Gly-309, Gln-313, and Gly-410. ADP-binding residues include Gly-410 and Asn-414.

This sequence belongs to the FGGY kinase family. As to quaternary structure, homotetramer and homodimer (in equilibrium). Post-translationally, the phosphoenolpyruvate-dependent sugar phosphotransferase system (PTS), including enzyme I, and histidine-containing protein (HPr) are required for the phosphorylation, which leads to the activation of the enzyme.

It carries out the reaction glycerol + ATP = sn-glycerol 3-phosphate + ADP + H(+). The protein operates within polyol metabolism; glycerol degradation via glycerol kinase pathway; sn-glycerol 3-phosphate from glycerol: step 1/1. Activated by phosphorylation and inhibited by fructose 1,6-bisphosphate (FBP). Functionally, key enzyme in the regulation of glycerol uptake and metabolism. Catalyzes the phosphorylation of glycerol to yield sn-glycerol 3-phosphate. The polypeptide is Glycerol kinase (Staphylococcus aureus (strain MSSA476)).